The sequence spans 506 residues: Ribose import ATP-binding protein RbsA 2 (506 aa).

ABC transporter domains are found at residues 5–241 (LRLS…VGRR) and 254–498 (ADAP…TAGT). ATP is bound at residue 37–44 (GENGAGKS).

This sequence belongs to the ABC transporter superfamily. Ribose importer (TC 3.A.1.2.1) family. In terms of assembly, the complex is composed of an ATP-binding protein (RbsA), two transmembrane proteins (RbsC) and a solute-binding protein (RbsB).

It localises to the cell inner membrane. The enzyme catalyses D-ribose(out) + ATP + H2O = D-ribose(in) + ADP + phosphate + H(+). Part of the ABC transporter complex RbsABC involved in ribose import. Responsible for energy coupling to the transport system. The sequence is that of Ribose import ATP-binding protein RbsA 2 from Burkholderia cenocepacia (strain HI2424).